Consider the following 260-residue polypeptide: Granzyme A (260 aa).

A signal peptide spans 1–26; the sequence is MRNASGPRGPSLATLLFLLLIPEGGC. A propeptide spans 27-28 (activation peptide); it reads ER. Residues 29 to 257 enclose the Peptidase S1 domain; sequence IIGGDTVVPH…HLNWIKKIMK (229 aa). Cys54 and Cys70 are oxidised to a cystine. Catalysis depends on charge relay system residues His69 and Asp113. Intrachain disulfides connect Cys147–Cys217, Cys178–Cys196, and Cys207–Cys232. N-linked (GlcNAc...) asparagine glycans are attached at residues Asn157 and Asn169. Ser211 functions as the Charge relay system in the catalytic mechanism.

The protein belongs to the peptidase S1 family. Granzyme subfamily. Homodimer; disulfide-linked. Interacts with APEX1. Found in cytotoxic lymphocytes and in normal lymphoid tissues such as thymus and spleen. As to expression, more abundant in lymphoid tissues than isoform HF2.

It is found in the secreted. Its subcellular location is the cytoplasmic granule. It catalyses the reaction Hydrolysis of proteins, including fibronectin, type IV collagen and nucleolin. Preferential cleavage: -Arg-|-Xaa-, -Lys-|-Xaa- &gt;&gt; -Phe-|-Xaa- in small molecule substrates.. Abundant protease in the cytosolic granules of cytotoxic T-cells and NK-cells which activates caspase-independent pyroptosis when delivered into the target cell through the immunological synapse. It cleaves after Lys or Arg. Cleaves APEX1 after 'Lys-31' and destroys its oxidative repair activity. Cleaves the nucleosome assembly protein SET after 'Lys-189', which disrupts its nucleosome assembly activity and allows the SET complex to translocate into the nucleus to nick and degrade the DNA. This Mus musculus (Mouse) protein is Granzyme A (Gzma).